The sequence spans 296 residues: D-alanine--D-alanine ligase (296 aa).

Residues T99 to Q292 form the ATP-grasp domain. G125–T176 is an ATP binding site. Mg(2+) contacts are provided by D247, E259, and N261.

The protein belongs to the D-alanine--D-alanine ligase family. Mg(2+) serves as cofactor. Mn(2+) is required as a cofactor.

Its subcellular location is the cytoplasm. It catalyses the reaction 2 D-alanine + ATP = D-alanyl-D-alanine + ADP + phosphate + H(+). It participates in cell wall biogenesis; peptidoglycan biosynthesis. Cell wall formation. In Pseudothermotoga lettingae (strain ATCC BAA-301 / DSM 14385 / NBRC 107922 / TMO) (Thermotoga lettingae), this protein is D-alanine--D-alanine ligase.